A 231-amino-acid chain; its full sequence is uncharacterized protein (231 aa).

Helical transmembrane passes span 26 to 46 (TYSW…LTAQ), 56 to 76 (SLRL…SMFA), 84 to 104 (AGAL…ALLF), 112 to 132 (ITAF…GFVI), 142 to 162 (FFLF…FVGS), 163 to 183 (SALS…LTAY), and 206 to 226 (INGA…LLNI).

This sequence belongs to the BI1 family.

It is found in the cell membrane. This is an uncharacterized protein from Deinococcus radiodurans (strain ATCC 13939 / DSM 20539 / JCM 16871 / CCUG 27074 / LMG 4051 / NBRC 15346 / NCIMB 9279 / VKM B-1422 / R1).